The sequence spans 31 residues: Cyclotide cter-D (31 aa).

The segment at residues 1-31 (GIPCAESCVWIPCTVTALLGCSCKDKVCYLN) is a cross-link (cyclopeptide (Gly-Asn)). 3 cysteine pairs are disulfide-bonded: C4-C21, C8-C23, and C13-C28.

Post-translationally, contains 3 disulfide bonds. In terms of processing, this is a cyclic peptide. Expressed in root, seed and nodule but not in flower, stem, shoot, leaf and pod.

Functionally, probably participates in a plant defense mechanism. The polypeptide is Cyclotide cter-D (Clitoria ternatea (Butterfly pea)).